The chain runs to 524 residues: Putative mediator of RNA polymerase II transcription subunit 8 (524 aa).

2 coiled-coil regions span residues 117–146 and 175–211; these read LKLH…SKHK and NAQQ…QQQQ. Disordered regions lie at residues 312 to 340, 356 to 379, and 430 to 451; these read VASP…QPSI, LPNT…IGGG, and QQNQ…IQHL. Polar residues predominate over residues 314-333; the sequence is SPQQQVTSKQVPIQSTNKPL. Positions 356 to 374 are enriched in low complexity; the sequence is LPNTTSPPVNNNNQSPINS. Residues 398 to 478 adopt a coiled-coil conformation; the sequence is IQQQIQLQQQ…LQQQFQQQQL (81 aa).

Belongs to the Mediator complex subunit 8 family. In terms of assembly, component of the Mediator complex. May be part of a multisubunit E3 ubiquitin-protein ligase complex.

The protein resides in the nucleus. It participates in protein modification; protein ubiquitination. Component of the Mediator complex, a coactivator involved in the regulated transcription of nearly all RNA polymerase II-dependent genes. Mediator functions as a bridge to convey information from gene-specific regulatory proteins to the basal RNA polymerase II transcription machinery. Mediator is recruited to promoters by direct interactions with regulatory proteins and serves as a scaffold for the assembly of a functional preinitiation complex with RNA polymerase II and the general transcription factors. May play a role as a target recruitment subunit in E3 ubiquitin-protein ligase complexes and thus in ubiquitination and subsequent proteasomal degradation of target proteins. In Dictyostelium discoideum (Social amoeba), this protein is Putative mediator of RNA polymerase II transcription subunit 8 (med8).